The following is a 427-amino-acid chain: Trigger factor (427 aa).

The 86-residue stretch at 163–248 (GDTVVIDFVG…IHEVKTKEVP (86 aa)) folds into the PPIase FKBP-type domain.

Belongs to the FKBP-type PPIase family. Tig subfamily.

It localises to the cytoplasm. It carries out the reaction [protein]-peptidylproline (omega=180) = [protein]-peptidylproline (omega=0). In terms of biological role, involved in protein export. Acts as a chaperone by maintaining the newly synthesized protein in an open conformation. Functions as a peptidyl-prolyl cis-trans isomerase. This Streptococcus pyogenes serotype M49 (strain NZ131) protein is Trigger factor.